The following is a 211-amino-acid chain: Small ribosomal subunit protein uS3 (211 aa).

The KH type-2 domain occupies 16–85 (IDEYFKTKLV…NPQIEVKQVE (70 aa)).

This sequence belongs to the universal ribosomal protein uS3 family. In terms of assembly, part of the 30S ribosomal subunit.

Binds the lower part of the 30S subunit head. The protein is Small ribosomal subunit protein uS3 of Methanococcus maripaludis (strain DSM 14266 / JCM 13030 / NBRC 101832 / S2 / LL).